The chain runs to 217 residues: Large ribosomal subunit protein uL4 (217 aa).

The interval Arg-42–Gln-100 is disordered.

It belongs to the universal ribosomal protein uL4 family. As to quaternary structure, part of the 50S ribosomal subunit.

In terms of biological role, one of the primary rRNA binding proteins, this protein initially binds near the 5'-end of the 23S rRNA. It is important during the early stages of 50S assembly. It makes multiple contacts with different domains of the 23S rRNA in the assembled 50S subunit and ribosome. Functionally, forms part of the polypeptide exit tunnel. The protein is Large ribosomal subunit protein uL4 of Mycobacterium avium (strain 104).